Reading from the N-terminus, the 213-residue chain is Thiamine-phosphate synthase (213 aa).

4-amino-2-methyl-5-(diphosphooxymethyl)pyrimidine is bound by residues Q38–K42 and N73. 2 residues coordinate Mg(2+): D74 and D93. S111 is a binding site for 4-amino-2-methyl-5-(diphosphooxymethyl)pyrimidine. T137–S139 is a binding site for 2-[(2R,5Z)-2-carboxy-4-methylthiazol-5(2H)-ylidene]ethyl phosphate. K140 is a binding site for 4-amino-2-methyl-5-(diphosphooxymethyl)pyrimidine. 2-[(2R,5Z)-2-carboxy-4-methylthiazol-5(2H)-ylidene]ethyl phosphate contacts are provided by residues G169 and I189–S190.

This sequence belongs to the thiamine-phosphate synthase family. Mg(2+) is required as a cofactor.

The catalysed reaction is 2-[(2R,5Z)-2-carboxy-4-methylthiazol-5(2H)-ylidene]ethyl phosphate + 4-amino-2-methyl-5-(diphosphooxymethyl)pyrimidine + 2 H(+) = thiamine phosphate + CO2 + diphosphate. It carries out the reaction 2-(2-carboxy-4-methylthiazol-5-yl)ethyl phosphate + 4-amino-2-methyl-5-(diphosphooxymethyl)pyrimidine + 2 H(+) = thiamine phosphate + CO2 + diphosphate. It catalyses the reaction 4-methyl-5-(2-phosphooxyethyl)-thiazole + 4-amino-2-methyl-5-(diphosphooxymethyl)pyrimidine + H(+) = thiamine phosphate + diphosphate. Its pathway is cofactor biosynthesis; thiamine diphosphate biosynthesis; thiamine phosphate from 4-amino-2-methyl-5-diphosphomethylpyrimidine and 4-methyl-5-(2-phosphoethyl)-thiazole: step 1/1. Condenses 4-methyl-5-(beta-hydroxyethyl)thiazole monophosphate (THZ-P) and 2-methyl-4-amino-5-hydroxymethyl pyrimidine pyrophosphate (HMP-PP) to form thiamine monophosphate (TMP). This Lysinibacillus sphaericus (strain C3-41) protein is Thiamine-phosphate synthase.